Reading from the N-terminus, the 106-residue chain is UPF0473 protein LCABL_08490 (106 aa).

This sequence belongs to the UPF0473 family.

The polypeptide is UPF0473 protein LCABL_08490 (Lacticaseibacillus casei (strain BL23) (Lactobacillus casei)).